The primary structure comprises 103 residues: MYAVIKTGGKQYTVKEGDVLKIEMLPENVGNEIKFSEVLMLVDGDKVTCGAPFVAKATVKAEVLDHGRHKKVKIIKFRRRKHHMKQMGHRQYYSQVKITAIGK.

It belongs to the bacterial ribosomal protein bL21 family. Part of the 50S ribosomal subunit. Contacts protein L20.

Its function is as follows. This protein binds to 23S rRNA in the presence of protein L20. The polypeptide is Large ribosomal subunit protein bL21 (Legionella pneumophila (strain Lens)).